The chain runs to 104 residues: Vegetative-specific protein H7 (104 aa).

In terms of domain architecture, HTH cro/C1-type spans 43–97 (IQRARNALKMTQKELAFKINERPGVINEYESGSAIPSQAVLSKLEKALNVKLRGK). Residues 54–73 (QKELAFKINERPGVINEYES) constitute a DNA-binding region (H-T-H motif).

In Dictyostelium discoideum (Social amoeba), this protein is Vegetative-specific protein H7 (cinD-1).